The primary structure comprises 85 residues: Small ribosomal subunit protein bS20 (85 aa).

Belongs to the bacterial ribosomal protein bS20 family.

Its function is as follows. Binds directly to 16S ribosomal RNA. The polypeptide is Small ribosomal subunit protein bS20 (Borrelia garinii subsp. bavariensis (strain ATCC BAA-2496 / DSM 23469 / PBi) (Borreliella bavariensis)).